The primary structure comprises 302 residues: Quinolinate synthase (302 aa).

Residues histidine 25 and serine 42 each coordinate iminosuccinate. Cysteine 87 contributes to the [4Fe-4S] cluster binding site. Residues tyrosine 113–asparagine 115 and serine 130 each bind iminosuccinate. Position 172 (cysteine 172) interacts with [4Fe-4S] cluster. Iminosuccinate is bound by residues histidine 198–glutamate 200 and threonine 215. Cysteine 260 serves as a coordination point for [4Fe-4S] cluster.

This sequence belongs to the quinolinate synthase family. Type 2 subfamily. It depends on [4Fe-4S] cluster as a cofactor.

It is found in the cytoplasm. It carries out the reaction iminosuccinate + dihydroxyacetone phosphate = quinolinate + phosphate + 2 H2O + H(+). It functions in the pathway cofactor biosynthesis; NAD(+) biosynthesis; quinolinate from iminoaspartate: step 1/1. Its function is as follows. Catalyzes the condensation of iminoaspartate with dihydroxyacetone phosphate to form quinolinate. The chain is Quinolinate synthase from Methanoregula boonei (strain DSM 21154 / JCM 14090 / 6A8).